Here is a 525-residue protein sequence, read N- to C-terminus: Protein disulfide-isomerase A2 (525 aa).

Positions 1–21 (MSRQLLPVLLLLLLRASCPWG) are cleaved as a signal peptide. The region spanning 27–152 (RSPSEEPPEE…IAEWLRRRVG (126 aa)) is the Thioredoxin 1 domain. Residues Cys71 and Cys74 each act as nucleophile in the active site. An intrachain disulfide couples Cys71 to Cys74. N-linked (GlcNAc...) asparagine glycans are attached at residues Asn127 and Asn284. Residues 367–496 (VLNGQVKPYL…FSKFLDNGGV (130 aa)) enclose the Thioredoxin 2 domain. Active-site nucleophile residues include Cys418 and Cys421. An intrachain disulfide couples Cys418 to Cys421. The tract at residues 492–525 (DNGGVLPTEEPPEEPAAPFPEPPANSTMGSKEEL) is disordered. The segment covering 505-514 (EPAAPFPEPP) has biased composition (pro residues). Asn516 carries N-linked (GlcNAc...) asparagine glycosylation. Polar residues predominate over residues 516–525 (NSTMGSKEEL). The Prevents secretion from ER signature appears at 522–525 (KEEL).

It belongs to the protein disulfide isomerase family. In terms of assembly, monomer; predominantly as monomer under reducing conditions. Homodimer; disulfide-linked. Part of a large chaperone multiprotein complex comprising DNAJB11, HSP90B1, HSPA5, HYOU, PDIA2, PDIA4, PDIA6, PPIB, SDF2L1, UGGT1 and very small amounts of ERP29, but not, or at very low levels, CALR nor CANX. In terms of processing, the disulfide-linked homodimer exhibits an enhanced chaperone activity. Glycosylated. In terms of tissue distribution, highly expressed in pancreas (at protein level).

The protein localises to the endoplasmic reticulum lumen. It catalyses the reaction Catalyzes the rearrangement of -S-S- bonds in proteins.. Functionally, acts as an intracellular estrogen-binding protein. May be involved in modulating cellular levels and biological functions of estrogens in the pancreas. May act as a chaperone that inhibits aggregation of misfolded proteins. The chain is Protein disulfide-isomerase A2 (PDIA2) from Homo sapiens (Human).